We begin with the raw amino-acid sequence, 85 residues long: Cysteine-rich venom protein 1 (85 aa).

Residues 1–21 (MCRYALIVLVVVVVATNLSEA) form the signal peptide. Disulfide bonds link Cys29-Cys63, Cys38-Cys59, Cys42-Cys53, Cys46-Cys84, and Cys65-Cys78. The TIL domain maps to 29–84 (CEPNRIYKTCGPACPPTCEDPDPDCNETPQCKAGCFCIPGLIENMKGGNCISPSLC).

It belongs to the serine protease inhibitor-like (TIL domain-containing) family. As to expression, expressed by the venom gland.

The protein resides in the secreted. May be a phenoloxidase inhibitor that stabilizes or inhibits venom phenoloxidase while it is stored in the venom sac. This Pimpla hypochondriaca (Parasitoid wasp) protein is Cysteine-rich venom protein 1.